The chain runs to 350 residues: Protein O-mannose kinase (350 aa).

Met-1 bears the N-acetylmethionine mark. At 1 to 20 (MEKQPQNSRRGLAPREVPPA) the chain is on the cytoplasmic side. A helical; Signal-anchor for type II membrane protein transmembrane segment spans residues 21 to 43 (VGLLLIMALMNTLLYLCLDHFFI). Residues 44-350 (APRQSTVDPT…AMMSQAREML (307 aa)) are Lumenal-facing. Residues 81–350 (VRQLKRVGEG…AMMSQAREML (270 aa)) enclose the Protein kinase domain. N-linked (GlcNAc...) asparagine glycans are attached at residues Asn-165, Asn-220, and Asn-235.

The protein belongs to the protein kinase superfamily. Ser/Thr protein kinase family. STKL subfamily. In terms of tissue distribution, highest expression is observed in brain, skeletal muscle, kidney and heart in fetal and adult tissues.

Its subcellular location is the endoplasmic reticulum membrane. The enzyme catalyses 3-O-[beta-D-GalNAc-(1-&gt;3)-beta-D-GlcNAc-(1-&gt;4)-alpha-D-Man]-L-Thr-[protein] + ATP = 3-O-[beta-D-GalNAc-(1-&gt;3)-beta-D-GlcNAc-(1-&gt;4)-(O-6-P-alpha-D-Man)]-Thr-[protein] + ADP + H(+). Functionally, protein O-mannose kinase that specifically mediates phosphorylation at the 6-position of an O-mannose of the trisaccharide (N-acetylgalactosamine (GalNAc)-beta-1,3-N-acetylglucosamine (GlcNAc)-beta-1,4-mannose) to generate phosphorylated O-mannosyl trisaccharide (N-acetylgalactosamine-beta-1,3-N-acetylglucosamine-beta-1,4-(phosphate-6-)mannose). Phosphorylated O-mannosyl trisaccharide is a carbohydrate structure present in alpha-dystroglycan (DAG1), which is required for binding laminin G-like domain-containing extracellular proteins with high affinity. Only shows kinase activity when the GalNAc-beta-3-GlcNAc-beta-terminus is linked to the 4-position of O-mannose, suggesting that this disaccharide serves as the substrate recognition motif. This chain is Protein O-mannose kinase (POMK), found in Homo sapiens (Human).